A 398-amino-acid chain; its full sequence is Meiotically up-regulated gene 126 protein (398 aa).

2 disordered regions span residues 30 to 81 (EEME…QRHR) and 119 to 260 (FESD…NSNS). Composition is skewed to polar residues over residues 119 to 135 (FESD…NFPT) and 183 to 199 (VQEN…QEPQ). Residues 210-222 (QANQQETSSNQEE) are compositionally biased toward low complexity. Over residues 224–236 (SFDRQETQDDKQK) the composition is skewed to basic and acidic residues. A compositionally biased stretch (polar residues) spans 248–260 (RNRNQATITNSNS). 4 helical membrane passes run 269–289 (IFVI…DLIE), 305–325 (IFLW…YLAL), 341–361 (GACF…CFLI), and 373–393 (LEIY…GAIY).

It is found in the membrane. In terms of biological role, has a role in meiosis. The chain is Meiotically up-regulated gene 126 protein (mug126) from Schizosaccharomyces pombe (strain 972 / ATCC 24843) (Fission yeast).